A 91-amino-acid polypeptide reads, in one-letter code: B3 domain-containing protein Os03g0164300 (91 aa).

Positions Met-1–Lys-91 form a DNA-binding region, TF-B3.

It is found in the nucleus. The sequence is that of B3 domain-containing protein Os03g0164300 from Oryza sativa subsp. japonica (Rice).